A 466-amino-acid polypeptide reads, in one-letter code: Asparagine--tRNA ligase (466 aa).

It belongs to the class-II aminoacyl-tRNA synthetase family. Homodimer.

The protein localises to the cytoplasm. It catalyses the reaction tRNA(Asn) + L-asparagine + ATP = L-asparaginyl-tRNA(Asn) + AMP + diphosphate + H(+). The sequence is that of Asparagine--tRNA ligase from Shewanella sp. (strain ANA-3).